The sequence spans 34 residues: Corticostatin-6 (34 aa).

Intrachain disulfides connect C3-C31, C5-C20, and C10-C30.

Belongs to the alpha-defensin family. In terms of tissue distribution, lung, spleen, small intestine, pituitary gland, adrenal medulla and plasma.

Its subcellular location is the secreted. In terms of biological role, microbicidal activity and inhibits corticotropin (ACTH) stimulated corticosterone production. The polypeptide is Corticostatin-6 (Oryctolagus cuniculus (Rabbit)).